A 171-amino-acid polypeptide reads, in one-letter code: Ribosome maturation factor RimM (171 aa).

The 74-residue stretch at 97–170 (EGEYYYHEII…LVTIHVMEGL (74 aa)) folds into the PRC barrel domain.

It belongs to the RimM family. Binds ribosomal protein uS19.

Its subcellular location is the cytoplasm. An accessory protein needed during the final step in the assembly of 30S ribosomal subunit, possibly for assembly of the head region. Essential for efficient processing of 16S rRNA. May be needed both before and after RbfA during the maturation of 16S rRNA. It has affinity for free ribosomal 30S subunits but not for 70S ribosomes. The chain is Ribosome maturation factor RimM from Bacillus cereus (strain ZK / E33L).